Consider the following 748-residue polypeptide: Putative pre-mRNA-splicing factor ATP-dependent RNA helicase DHX32 (748 aa).

The 167-residue stretch at 74-240 (LEHLAHNQIV…YGNAPLVEAE (167 aa)) folds into the Helicase ATP-binding domain. 87–94 (AGPKSGKS) serves as a coordination point for ATP. Residues 263–439 (RLLFEIHHTK…SMVLFLKRMD (177 aa)) enclose the Helicase C-terminal domain. Residues 706 to 748 (SETKDLLQQDQTPDTPPTEEPREEEPLHEANDEGTAEQRCIIQ) form a disordered region.

The protein belongs to the DEAD box helicase family. DEAH subfamily.

The protein resides in the nucleus. The protein localises to the mitochondrion. It carries out the reaction ATP + H2O = ADP + phosphate + H(+). The protein is Putative pre-mRNA-splicing factor ATP-dependent RNA helicase DHX32 (dhx32) of Xenopus laevis (African clawed frog).